Consider the following 484-residue polypeptide: Glycogen synthase (484 aa).

ADP-alpha-D-glucose is bound at residue Lys15.

The protein belongs to the glycosyltransferase 1 family. Bacterial/plant glycogen synthase subfamily.

The enzyme catalyses [(1-&gt;4)-alpha-D-glucosyl](n) + ADP-alpha-D-glucose = [(1-&gt;4)-alpha-D-glucosyl](n+1) + ADP + H(+). The protein operates within glycan biosynthesis; glycogen biosynthesis. Functionally, synthesizes alpha-1,4-glucan chains using ADP-glucose. The polypeptide is Glycogen synthase (Koribacter versatilis (strain Ellin345)).